A 163-amino-acid polypeptide reads, in one-letter code: Nucleotide-binding protein LBJ_2391 (163 aa).

It belongs to the YajQ family.

Nucleotide-binding protein. The polypeptide is Nucleotide-binding protein LBJ_2391 (Leptospira borgpetersenii serovar Hardjo-bovis (strain JB197)).